The sequence spans 80 residues: Bowman-Birk type proteinase inhibitor DE-4 (80 aa).

A compositionally biased stretch (acidic residues) spans 1-10 (DDDHSDDEPR). The interval 1 to 29 (DDDHSDDEPRESESSKPCCSSCCTRSRPP) is disordered. The segment covering 15–29 (SKPCCSSCCTRSRPP) has biased composition (low complexity). Disulfide bonds link cysteine 18/cysteine 71, cysteine 19/cysteine 33, cysteine 22/cysteine 67, cysteine 23/cysteine 31, cysteine 41/cysteine 48, cysteine 45/cysteine 60, and cysteine 50/cysteine 58.

It belongs to the Bowman-Birk serine protease inhibitor family.

This is Bowman-Birk type proteinase inhibitor DE-4 from Philenoptera violacea (Apple-leaf).